The primary structure comprises 1019 residues: Antigenic heat-stable 120 kDa protein (1019 aa).

The disordered stretch occupies residues M1–E33. A compositionally biased stretch (basic and acidic residues) spans P14–K24.

The protein resides in the cytoplasm. This Rickettsia typhi (strain ATCC VR-144 / Wilmington) protein is Antigenic heat-stable 120 kDa protein (sca4).